Here is a 212-residue protein sequence, read N- to C-terminus: Phosphoribosylglycinamide formyltransferase (212 aa).

11 to 13 is a N(1)-(5-phospho-beta-D-ribosyl)glycinamide binding site; that stretch reads GSN. Residues Arg64, 89–92, and Asn106 contribute to the (6R)-10-formyltetrahydrofolate site; that span reads MRIL. Catalysis depends on His108, which acts as the Proton donor. 140-144 provides a ligand contact to (6R)-10-formyltetrahydrofolate; that stretch reads TDELD. 170–173 provides a ligand contact to N(1)-(5-phospho-beta-D-ribosyl)glycinamide; sequence QTQE.

The protein belongs to the GART family. In terms of assembly, monomer. Homodimer below pH 6.8.

The catalysed reaction is N(1)-(5-phospho-beta-D-ribosyl)glycinamide + (6R)-10-formyltetrahydrofolate = N(2)-formyl-N(1)-(5-phospho-beta-D-ribosyl)glycinamide + (6S)-5,6,7,8-tetrahydrofolate + H(+). The protein operates within purine metabolism; IMP biosynthesis via de novo pathway; N(2)-formyl-N(1)-(5-phospho-D-ribosyl)glycinamide from N(1)-(5-phospho-D-ribosyl)glycinamide (10-formyl THF route): step 1/1. Inhibited by N10-(bromoacetyl)-5,8-dideazafolate. In terms of biological role, catalyzes the transfer of a formyl group from 10-formyltetrahydrofolate to 5-phospho-ribosyl-glycinamide (GAR), producing 5-phospho-ribosyl-N-formylglycinamide (FGAR) and tetrahydrofolate. The protein is Phosphoribosylglycinamide formyltransferase of Escherichia coli (strain K12).